The sequence spans 452 residues: GTPase Der (452 aa).

EngA-type G domains are found at residues 4–169 (PIVA…PAPQ) and 177–352 (IKVA…QEHR). GTP-binding positions include 10–17 (GRPNVGKS), 57–61 (DTGGL), 120–123 (NKCE), 183–190 (GRPNVGKS), 230–234 (DTAGI), and 295–298 (NKWD). The KH-like domain occupies 353–439 (RRVTTAVINE…IRLFWRGKKV (87 aa)).

The protein belongs to the TRAFAC class TrmE-Era-EngA-EngB-Septin-like GTPase superfamily. EngA (Der) GTPase family. In terms of assembly, associates with the 50S ribosomal subunit.

Functionally, GTPase that plays an essential role in the late steps of ribosome biogenesis. The polypeptide is GTPase Der (Synechocystis sp. (strain ATCC 27184 / PCC 6803 / Kazusa)).